A 309-amino-acid polypeptide reads, in one-letter code: Heme-dependent oxidative N-demethylase beta subunit (309 aa).

The region spanning 2–103 (STLLDVRVAA…SPPANLFPLH (102 aa)) is the FAD-binding FR-type domain. Positions 226 to 309 (FRVELARSGQ…GCGSPILLDL (84 aa)) constitute a 2Fe-2S ferredoxin-type domain. [2Fe-2S] cluster is bound by residues cysteine 260, cysteine 265, cysteine 268, and cysteine 296.

It belongs to the PDR/VanB family. The heme-dependent oxidative N-demethylase (HODM) is a heterotetramer composed of a catalytic alpha subunit, a FMN/2Fe-2S-dependent oxidoreductase beta subunit, a gamma subunit with putative aminotransferase activity, and a delta subunit of unknown function. The cofactor is [2Fe-2S] cluster. FMN serves as cofactor.

In terms of biological role, component of the heme-dependent oxidative N-demethylase (HODM) enzyme, that catalyzes the NADPH-dependent oxidation of dimethylamine (DMA) to methylamine (MA) and formaldehyde. Functions in bacterial methylated amine catabolism, linking alkylamine oxidation to the tetrahydrofolate C1 pool. The beta subunit of HODM binds FMN and a 2Fe-2S cluster, and likely reduces the ferric heme iron of the alpha subunit to ferrous using NADPH. This chain is Heme-dependent oxidative N-demethylase beta subunit, found in Ectopseudomonas mendocina (strain ymp) (Pseudomonas mendocina).